A 217-amino-acid chain; its full sequence is Pyridoxine/pyridoxamine 5'-phosphate oxidase (217 aa).

Residues 66 to 71 (RMVLLK), 81 to 82 (FT), Arg-87, Lys-88, and Gln-110 contribute to the FMN site. Lys-71 serves as a coordination point for substrate. Substrate is bound by residues Tyr-128, Arg-132, and Ser-136. FMN-binding positions include 145–146 (QS) and Trp-190. 196–198 (RLH) is a binding site for substrate. Position 200 (Arg-200) interacts with FMN.

This sequence belongs to the pyridoxamine 5'-phosphate oxidase family. In terms of assembly, homodimer. FMN serves as cofactor.

The catalysed reaction is pyridoxamine 5'-phosphate + O2 + H2O = pyridoxal 5'-phosphate + H2O2 + NH4(+). It catalyses the reaction pyridoxine 5'-phosphate + O2 = pyridoxal 5'-phosphate + H2O2. It participates in cofactor metabolism; pyridoxal 5'-phosphate salvage; pyridoxal 5'-phosphate from pyridoxamine 5'-phosphate: step 1/1. The protein operates within cofactor metabolism; pyridoxal 5'-phosphate salvage; pyridoxal 5'-phosphate from pyridoxine 5'-phosphate: step 1/1. Its function is as follows. Catalyzes the oxidation of either pyridoxine 5'-phosphate (PNP) or pyridoxamine 5'-phosphate (PMP) into pyridoxal 5'-phosphate (PLP). This is Pyridoxine/pyridoxamine 5'-phosphate oxidase from Psychromonas ingrahamii (strain DSM 17664 / CCUG 51855 / 37).